Reading from the N-terminus, the 318-residue chain is Small ribosomal subunit protein uS3 (318 aa).

The region spanning 17 to 86 is the KH type-2 domain; the sequence is MDEYFAEQLS…NPQIDAQEVK (70 aa). Residues 198–229 show a composition bias toward basic and acidic residues; that stretch reads SVEVEEPAEKPAEKPAEKPAEKAAAPKKEAAK. A disordered region spans residues 198 to 275; that stretch reads SVEVEEPAEK…VQAETSEEIE (78 aa). A compositionally biased stretch (pro residues) spans 234 to 250; it reads APAPEAPAPAPEAPAPA. The span at 253-275 shows a compositional bias: acidic residues; the sequence is EEAEVAEPEEAEEVQAETSEEIE.

The protein belongs to the universal ribosomal protein uS3 family. As to quaternary structure, part of the 30S ribosomal subunit.

Functionally, binds the lower part of the 30S subunit head. In Methanosarcina acetivorans (strain ATCC 35395 / DSM 2834 / JCM 12185 / C2A), this protein is Small ribosomal subunit protein uS3.